Here is a 206-residue protein sequence, read N- to C-terminus: Small ribosomal subunit protein uS5 (206 aa).

Positions 1-23 (MTDTPTKQENQSKTENPPSSNAN) are enriched in polar residues. The disordered stretch occupies residues 1 to 52 (MTDTPTKQENQSKTENPPSSNANEQRRGNRNNDRKRNRRGDSKNERDSEWQE). Positions 24–52 (EQRRGNRNNDRKRNRRGDSKNERDSEWQE) are enriched in basic and acidic residues. Residues 50 to 113 (WQERVVQIRR…SDGKKHLVRV (64 aa)) form the S5 DRBM domain.

The protein belongs to the universal ribosomal protein uS5 family. In terms of assembly, part of the 30S ribosomal subunit. Contacts proteins S4 and S8.

Its function is as follows. With S4 and S12 plays an important role in translational accuracy. In terms of biological role, located at the back of the 30S subunit body where it stabilizes the conformation of the head with respect to the body. In Prochlorococcus marinus subsp. pastoris (strain CCMP1986 / NIES-2087 / MED4), this protein is Small ribosomal subunit protein uS5.